The chain runs to 172 residues: Odorant-binding protein (172 aa).

Residues 1 to 15 (MVKFLLIVLALGVSC) form the signal peptide. 2 disulfide bridges follow: C60/C64 and C79/C170.

Belongs to the calycin superfamily. Lipocalin family. As to quaternary structure, homodimer.

The protein localises to the secreted. Its function is as follows. This protein is found in nasal epithelium and it binds a wide variety of chemical odorants. This Rattus norvegicus (Rat) protein is Odorant-binding protein (Obp1f).